Here is a 403-residue protein sequence, read N- to C-terminus: Non-structural maintenance of chromosomes element 4 homolog A (403 aa).

A compositionally biased stretch (basic and acidic residues) spans 1 to 45; that stretch reads MRKTVKRESEATGGKREADDEPEKLRSVKKEKQRKTEADSVRPDE. Disordered stretches follow at residues 1–57, 194–226, and 342–403; these read MRKT…QGIS, LKQRKRAPNRKRTKPGEGVRPDEVDDSQSEEKT, and SSCP…LTSS. The span at 196 to 206 shows a compositional bias: basic residues; sequence QRKRAPNRKRT. The span at 342–353 shows a compositional bias: low complexity; it reads SSCPAASAPASA. Over residues 354-363 the composition is skewed to polar residues; that stretch reads DFTQDTQTTP. The segment covering 384 to 393 has biased composition (basic and acidic residues); it reads TPDKEGDGTR. Over residues 394–403 the composition is skewed to basic residues; it reads RRCKRRLTSS.

It belongs to the NSE4 family. Interacts with SMC5, SMC6A or SMC6B. The SMC5-SMC6 complex is composed of the SMC5 and SMC6 heterodimer attached via their hinge domain and from the non-SMC subunit NSE4A or NSE4B. In terms of tissue distribution, expressed in seedlings, rosette leaves and floral buds.

It localises to the nucleus. Its function is as follows. Component of the SMC5-SMC6 complex, that promotes sister chromatid alignment after DNA damage and facilitates double-stranded DNA breaks (DSBs) repair via homologous recombination between sister chromatids. The polypeptide is Non-structural maintenance of chromosomes element 4 homolog A (NSE4A) (Arabidopsis thaliana (Mouse-ear cress)).